Reading from the N-terminus, the 148-residue chain is Cyanate hydratase (148 aa).

Active-site residues include Arg-89, Glu-92, and Ser-115.

This sequence belongs to the cyanase family.

The enzyme catalyses cyanate + hydrogencarbonate + 3 H(+) = NH4(+) + 2 CO2. Functionally, catalyzes the reaction of cyanate with bicarbonate to produce ammonia and carbon dioxide. The protein is Cyanate hydratase of Sulfurisphaera tokodaii (strain DSM 16993 / JCM 10545 / NBRC 100140 / 7) (Sulfolobus tokodaii).